The primary structure comprises 500 residues: Carnosic acid synthase (500 aa).

Residues 4 to 24 (LILLSLAFLASCVVAYSRRRP) form a helical membrane-spanning segment. Cys-443 is a heme binding site.

It belongs to the cytochrome P450 family. The cofactor is heme. As to expression, mostly expressed in young leaves, particularly in glandular trichomes.

The protein resides in the membrane. It carries out the reaction 11-hydroxyferruginol + 3 reduced [NADPH--hemoprotein reductase] + 3 O2 = carnosate + 3 oxidized [NADPH--hemoprotein reductase] + 4 H2O + 4 H(+). The catalysed reaction is miltiradiene + 2 reduced [NADPH--hemoprotein reductase] + 2 O2 = miltiradien-20-al + 2 oxidized [NADPH--hemoprotein reductase] + 3 H2O + 2 H(+). The enzyme catalyses ferruginol + 3 reduced [NADPH--hemoprotein reductase] + 3 O2 = pisiferate + 3 oxidized [NADPH--hemoprotein reductase] + 4 H2O + 4 H(+). Its pathway is secondary metabolite biosynthesis; terpenoid biosynthesis. Its function is as follows. Monooxygenase involved in the biosynthesis of carnosate, a potent antioxidant labdane-related diterpene natural product. Catalyzes the oxidation of 11-hydroxyferruginol to produce carnosate. Mediates the conversion of miltiradien into miltiradien-20-al. Also involved in the production of pisiferic acid and derivative products from ferruginol. This is Carnosic acid synthase from Salvia fruticosa (Greek sage).